A 342-amino-acid polypeptide reads, in one-letter code: S-adenosylmethionine:tRNA ribosyltransferase-isomerase (342 aa).

It belongs to the QueA family. As to quaternary structure, monomer.

The protein resides in the cytoplasm. It catalyses the reaction 7-aminomethyl-7-carbaguanosine(34) in tRNA + S-adenosyl-L-methionine = epoxyqueuosine(34) in tRNA + adenine + L-methionine + 2 H(+). Its pathway is tRNA modification; tRNA-queuosine biosynthesis. In terms of biological role, transfers and isomerizes the ribose moiety from AdoMet to the 7-aminomethyl group of 7-deazaguanine (preQ1-tRNA) to give epoxyqueuosine (oQ-tRNA). In Streptococcus pneumoniae (strain ATCC BAA-255 / R6), this protein is S-adenosylmethionine:tRNA ribosyltransferase-isomerase.